The chain runs to 313 residues: E3 ubiquitin-protein ligase SINA-like 2 (313 aa).

The disordered stretch occupies residues 1–26 (MSGEASTSRRKRQRVPSSVESVENGG). The RING-type zinc finger occupies 44-80 (CPICCHALTSPIFQCDNGHIACSSCCTKLRNKCPSCA). Residues 94–277 (VVEAVMVTCP…LKMEICIRKL (184 aa)) are SBD. The SIAH-type zinc finger occupies 97-155 (AVMVTCPNVKHGCTEKFSYGKELIHEKDCRFALCYCPAPNCNYSGVYKDLYSHFYVNHY). Zn(2+) is bound by residues C102, C109, H121, C125, C132, C137, H149, and H154. The segment at 278 to 313 (KKDEEEADEDEESEEEEDDDDDDDDDDEEEDADEEE) is disordered. Positions 282 to 313 (EEADEDEESEEEEDDDDDDDDDDEEEDADEEE) are enriched in acidic residues.

This sequence belongs to the SINA (Seven in absentia) family.

The enzyme catalyses S-ubiquitinyl-[E2 ubiquitin-conjugating enzyme]-L-cysteine + [acceptor protein]-L-lysine = [E2 ubiquitin-conjugating enzyme]-L-cysteine + N(6)-ubiquitinyl-[acceptor protein]-L-lysine.. It participates in protein modification; protein ubiquitination. E3 ubiquitin-protein ligase that mediates ubiquitination and subsequent proteasomal degradation of target proteins. E3 ubiquitin ligases accept ubiquitin from an E2 ubiquitin-conjugating enzyme in the form of a thioester and then directly transfers the ubiquitin to targeted substrates. It probably triggers the ubiquitin-mediated degradation of different substrates. The sequence is that of E3 ubiquitin-protein ligase SINA-like 2 from Arabidopsis thaliana (Mouse-ear cress).